Consider the following 238-residue polypeptide: MAGVNVCIKCSMFIFNFVFWLCGAIILSVAISIRAGKIGQEILAPGDADLNLFIAVNILIFVGAVIMILGFLGCCGAMKENQFMMILFFVGLLMILLLQVAAGIVATTRKSKTEQALNKTLLINARLLSSTDENERVFQKAFSELQEELKCCGLVNGASDWGSNFQHYYRTCECPSESDSSCTKYSGKTIYKQSCFASISQMFSKRLFIVLALAFGLAAIEVLGLIFSIVLYCQMRKK.

The Cytoplasmic portion of the chain corresponds to 1–9; the sequence is MAGVNVCIK. Residues 10 to 33 traverse the membrane as a helical segment; sequence CSMFIFNFVFWLCGAIILSVAISI. Topologically, residues 34–57 are extracellular; it reads RAGKIGQEILAPGDADLNLFIAVN. A helical transmembrane segment spans residues 58-72; sequence ILIFVGAVIMILGFL. The Cytoplasmic segment spans residues 73 to 83; that stretch reads GCCGAMKENQF. Residues 84–109 form a helical membrane-spanning segment; that stretch reads MMILFFVGLLMILLLQVAAGIVATTR. The Extracellular portion of the chain corresponds to 110–206; the sequence is KSKTEQALNK…ASISQMFSKR (97 aa). Residue Asn118 is glycosylated (N-linked (GlcNAc...) asparagine). A helical membrane pass occupies residues 207–231; sequence LFIVLALAFGLAAIEVLGLIFSIVL. Over 232–238 the chain is Cytoplasmic; sequence YCQMRKK.

This sequence belongs to the tetraspanin (TM4SF) family. As to quaternary structure, forms homooligomers. Interacts with MEP1B. Interacts with integrin alpha3/ITGA3. Interacts with RICTOR and MTOR. Interacts with ADAM17. Interacts with ECE1.

The protein localises to the cell membrane. Structural component of specialized membrane microdomains known as tetraspanin-enriched microdomains (TERMs), which act as platforms for receptor clustering and signaling. Participates thereby in diverse biological functions such as cell signal transduction, migration and protein trafficking. Promotes ADAM17-mediated TNF-alpha processing through recruitment of ADAM17 to tetraspanin-enriched micro-domains (TEMs). Forms a complex with RICTOR and integrin alpha3/ITGA3 to mediate mTORC2 activation and AKT1 phosphorylation leading to cell migration. Reduces apoptosis and autophagy induced by high glucose levels through forming a complex with mTOR and RICTOR. Contributes to the maintenance of intestinal epithelial barrier and plays a role in the regulation of intestine inflammation by switching interferon gamma receptor 1/IFNGR1 from clathrin-dependent to lipid raft-dependent endocytosis route to limit STAT1 activation magnitude and duration. Acts as a modulator of the endothelin axis by associating with endothelin converting enzyme ECE1 and regulating its activity of conversion of the endothelin-1 precursor to endothelin. In Bos taurus (Bovine), this protein is Tetraspanin-8 (TSPAN8).